The following is a 120-amino-acid chain: Glycine cleavage system H protein (120 aa).

The 83-residue stretch at V17 to K99 folds into the Lipoyl-binding domain. N6-lipoyllysine is present on K58.

It belongs to the GcvH family. As to quaternary structure, the glycine cleavage system is composed of four proteins: P, T, L and H. (R)-lipoate serves as cofactor.

The glycine cleavage system catalyzes the degradation of glycine. The H protein shuttles the methylamine group of glycine from the P protein to the T protein. This chain is Glycine cleavage system H protein, found in Rhizobium etli (strain ATCC 51251 / DSM 11541 / JCM 21823 / NBRC 15573 / CFN 42).